The sequence spans 324 residues: UDP-N-acetylenolpyruvoylglucosamine reductase (324 aa).

The FAD-binding PCMH-type domain occupies 36 to 203 (FRAGGLAELM…TSVLFEGYPE (168 aa)). Residue arginine 183 is part of the active site. The Proton donor role is filled by serine 232. The active site involves glutamate 302.

Belongs to the MurB family. Requires FAD as cofactor.

The protein localises to the cytoplasm. It carries out the reaction UDP-N-acetyl-alpha-D-muramate + NADP(+) = UDP-N-acetyl-3-O-(1-carboxyvinyl)-alpha-D-glucosamine + NADPH + H(+). It participates in cell wall biogenesis; peptidoglycan biosynthesis. Functionally, cell wall formation. The protein is UDP-N-acetylenolpyruvoylglucosamine reductase of Rhizobium johnstonii (strain DSM 114642 / LMG 32736 / 3841) (Rhizobium leguminosarum bv. viciae).